Here is a 388-residue protein sequence, read N- to C-terminus: Phosphopentomutase (388 aa).

6 residues coordinate Mn(2+): aspartate 10, aspartate 282, histidine 287, aspartate 323, histidine 324, and histidine 335.

Belongs to the phosphopentomutase family. Requires Mn(2+) as cofactor.

The protein localises to the cytoplasm. It catalyses the reaction 2-deoxy-alpha-D-ribose 1-phosphate = 2-deoxy-D-ribose 5-phosphate. It carries out the reaction alpha-D-ribose 1-phosphate = D-ribose 5-phosphate. Its pathway is carbohydrate degradation; 2-deoxy-D-ribose 1-phosphate degradation; D-glyceraldehyde 3-phosphate and acetaldehyde from 2-deoxy-alpha-D-ribose 1-phosphate: step 1/2. Its function is as follows. Isomerase that catalyzes the conversion of deoxy-ribose 1-phosphate (dRib-1-P) and ribose 1-phosphate (Rib-1-P) to deoxy-ribose 5-phosphate (dRib-5-P) and ribose 5-phosphate (Rib-5-P), respectively. In Desulfitobacterium hafniense (strain DSM 10664 / DCB-2), this protein is Phosphopentomutase.